We begin with the raw amino-acid sequence, 120 residues long: Small ribosomal subunit protein eS24 (120 aa).

Residues 101–120 are disordered; sequence RDAGTKQKKGGSKGGQGAKG.

The protein belongs to the eukaryotic ribosomal protein eS24 family.

The protein is Small ribosomal subunit protein eS24 of Saccharolobus solfataricus (strain ATCC 35092 / DSM 1617 / JCM 11322 / P2) (Sulfolobus solfataricus).